The chain runs to 156 residues: UPF0232 protein BL0636 (156 aa).

The protein belongs to the UPF0232 family.

The protein is UPF0232 protein BL0636 of Bifidobacterium longum (strain NCC 2705).